The chain runs to 470 residues: Nuclear receptor ROR-beta (470 aa).

The segment at residues 18–93 (VIPCKICGDK…LGMSRDAVKF (76 aa)) is a DNA-binding region (nuclear receptor). 2 NR C4-type zinc fingers span residues 21–41 (CKIC…CEGC) and 57–81 (CPRQ…LQKC). Over residues 104 to 117 (LYAEVQKHQQRLQE) the composition is skewed to basic and acidic residues. Residues 104 to 127 (LYAEVQKHQQRLQEQRQQQSGEAE) form a disordered region. The NR LBD domain occupies 222-460 (EIDRIAQNII…TLFPPLYKEL (239 aa)). The short motif at 456-461 (LYKELF) is the AF-2 element.

It belongs to the nuclear hormone receptor family. NR1 subfamily. As to quaternary structure, monomer. Interacts with CRX.

It is found in the nucleus. The protein localises to the nucleoplasm. Nuclear receptor that binds DNA as a monomer to ROR response elements (RORE) containing a single core motif half-site 5'-AGGTCA-3' preceded by a short A-T-rich sequence. Considered to have intrinsic transcriptional activity, have some natural ligands such as all-trans retinoic acid (ATRA) and other retinoids which act as inverse agonists repressing the transcriptional activity. Required for normal postnatal development of rod and cone photoreceptor cells. Modulates rod photoreceptors differentiation at least by inducing the transcription factor NRL-mediated pathway. In cone photoreceptor cells, regulates transcription of OPN1SW. Involved in the regulation of the period length and stability of the circadian rhythm. May control cytoarchitectural patterning of neocortical neurons during development. May act in a dose-dependent manner to regulate barrel formation upon innervation of layer IV neurons by thalamocortical axons. May play a role in the suppression of osteoblastic differentiation through the inhibition of RUNX2 transcriptional activity. In terms of biological role, isoform 1 is critical for hindlimb motor control and for the differentiation of amacrine and horizontal cells in the retina. Regulates the expression of PTF1A synergistically with FOXN4. The polypeptide is Nuclear receptor ROR-beta (RORB) (Homo sapiens (Human)).